Reading from the N-terminus, the 268-residue chain is TodF product hydratase (268 aa).

Belongs to the hydratase/decarboxylase family.

It participates in xenobiotic degradation; toluene degradation. Functionally, converts the product of 2-hydroxy-6-oxo-2,4-heptadienoate hydrolase. The protein is TodF product hydratase (todJ) of Pseudomonas putida (strain ATCC 700007 / DSM 6899 / JCM 31910 / BCRC 17059 / LMG 24140 / F1).